The following is a 512-amino-acid chain: MLKHISSVFWIVIAITAAAVLWGVISPDSLQNVSQSAQAFITDSFGWYYLLVVSLFVGFCLFLIFSPIGKIKLGKPDEKPEFGLLSWFAMLFSAGMGIGLVFYGAAEPISHYAISSPSGETETPQAFRDALRYTFFHWGLHAWAIYAIVALCIAYFQFRKGAPGLISSTLSPILGDKVNGPIGKAIDCIAVFATVVGVSTSLGLGATQINGGLNYLFGIPNAFIVQLVLIIIVTVLFLLSAWSGLGKGIKYLSNTNMVLAGLLMLFMLVVGPTVLIMNSFTDSIGQYIQNIVQMSFRLTPNDPEKREWINSWTIFYWAWWISWSPFVGIFIARVSRGRTIREFLIGVLVTPCILTFLWFSIFGVSAMDLQQKGAFNVAKLSTETMLFGTLDHYPLTMVTSILALILIAVFFITSADSATFVLGMQTSYGSLNPANSVKLSWGIIQSAMAAVLLYSGGLAALQNTAILAALPFSIVILLMIASLYQSLSKERREIKKAEKLDKPRSPRVKKAY.

A run of 12 helical transmembrane segments spans residues 5 to 25, 45 to 65, 82 to 102, 135 to 155, 186 to 206, 222 to 242, 257 to 277, 312 to 332, 343 to 363, 395 to 415, 441 to 461, and 464 to 484; these read ISSV…WGVI, FGWY…FLIF, FGLL…GLVF, FFHW…CIAY, IDCI…GLGA, AFIV…LSAW, MVLA…VLIM, WTIF…IFIA, FLIG…SIFG, LTMV…ITSA, WGII…LAAL, and TAIL…ASLY.

Belongs to the BCCT transporter (TC 2.A.15) family.

The protein resides in the cell membrane. Its activity is regulated as follows. Activity is stimulated by high osmolarity. High-affinity uptake of glycine betaine. Does not mediate either carnitine or choline uptake. The chain is Glycine betaine transporter OpuD (opuD) from Bacillus subtilis (strain 168).